The sequence spans 295 residues: MYTSVLLNVESTILDFWRLLKPRIMYLVVFTAVAGMVTAPGSMHPFLALISLICVALGSGSAGAINMWYDRDIDLLMERTKNRPIPSGRVSAESALEFGITLGILSVFIMAIAVNYISAALLAVSILFYVFIYTIWLKRRTPQNIVIGGAAGAFPPMIGWAAVTNSVSWESFILFLVIFMWTPPHFWALSLNKSEDYAKASIPMSNIVYGPEKTRKYILIYSVLLVLTSLLPALFLKKALLYLSMATFEGCVFIWYAVSVMKFKNHSSQKKMFSYSISYLFSLFASIIFCSIDLF.

9 consecutive transmembrane segments (helical) span residues 24–44 (IMYL…GSMH), 45–65 (PFLA…AGAI), 94–114 (SALE…AIAV), 117–137 (ISAA…TIWL), 144–164 (NIVI…AAVT), 171–191 (SFIL…ALSL), 216–236 (KYIL…ALFL), 240–260 (LLYL…AVSV), and 272–292 (MFSY…FCSI).

Belongs to the UbiA prenyltransferase family. Protoheme IX farnesyltransferase subfamily.

It is found in the cell membrane. The catalysed reaction is heme b + (2E,6E)-farnesyl diphosphate + H2O = Fe(II)-heme o + diphosphate. Its pathway is porphyrin-containing compound metabolism; heme O biosynthesis; heme O from protoheme: step 1/1. Functionally, converts heme B (protoheme IX) to heme O by substitution of the vinyl group on carbon 2 of heme B porphyrin ring with a hydroxyethyl farnesyl side group. This chain is Protoheme IX farnesyltransferase, found in Wolbachia pipientis wMel.